The sequence spans 188 residues: dCTP deaminase (188 aa).

DCTP-binding positions include 111–116 (KSTYAR), 135–137 (TLE), glutamine 156, tyrosine 170, and glutamine 180. Residue glutamate 137 is the Proton donor/acceptor of the active site.

It belongs to the dCTP deaminase family. In terms of assembly, homotrimer.

The catalysed reaction is dCTP + H2O + H(+) = dUTP + NH4(+). Its pathway is pyrimidine metabolism; dUMP biosynthesis; dUMP from dCTP (dUTP route): step 1/2. Catalyzes the deamination of dCTP to dUTP. The sequence is that of dCTP deaminase from Aromatoleum aromaticum (strain DSM 19018 / LMG 30748 / EbN1) (Azoarcus sp. (strain EbN1)).